Consider the following 507-residue polypeptide: Ribonuclease Y (507 aa).

Residues 1 to 21 traverse the membrane as a helical segment; the sequence is MLWYIVAGAGGLLIGYLIANY. The KH domain maps to 197–282; the sequence is TVSTVSLPSD…EMYEKAKQEV (86 aa). In terms of domain architecture, HD spans 323-416; it reads VLNHSIEVAL…VAAADALSAA (94 aa).

The protein belongs to the RNase Y family.

The protein resides in the cell membrane. Functionally, endoribonuclease that initiates mRNA decay. This Thermotoga sp. (strain RQ2) protein is Ribonuclease Y.